Here is a 259-residue protein sequence, read N- to C-terminus: Cobalt transport protein CbiM (259 aa).

Residues 1–25 (MFRRTTWLTLYLLLAMAALARPAFA) form the signal peptide. 6 helical membrane passes run 31–51 (GFLP…FWIW), 68–88 (MLLG…LPSV), 100–120 (LGAV…VLLF), 132–152 (TLGA…YGLY), 160–180 (GSMP…TYVT), and 206–226 (IFAV…VIVF).

Belongs to the CbiM family. Forms an energy-coupling factor (ECF) transporter complex composed of an ATP-binding protein (A component, CbiO), a transmembrane protein (T component, CbiQ) and 2 possible substrate-capture proteins (S components, CbiM and CbiN) of unknown stoichimetry.

It localises to the cell membrane. It functions in the pathway cofactor biosynthesis; adenosylcobalamin biosynthesis. Part of the energy-coupling factor (ECF) transporter complex CbiMNOQ involved in cobalt import. This is Cobalt transport protein CbiM from Moorella thermoacetica (strain ATCC 39073 / JCM 9320).